The chain runs to 284 residues: 4-diphosphocytidyl-2-C-methyl-D-erythritol kinase (284 aa).

Lysine 14 is a catalytic residue. 98-108 contributes to the ATP binding site; that stretch reads PMGGGIGGGSS. The active site involves aspartate 140.

It belongs to the GHMP kinase family. IspE subfamily.

It carries out the reaction 4-CDP-2-C-methyl-D-erythritol + ATP = 4-CDP-2-C-methyl-D-erythritol 2-phosphate + ADP + H(+). It functions in the pathway isoprenoid biosynthesis; isopentenyl diphosphate biosynthesis via DXP pathway; isopentenyl diphosphate from 1-deoxy-D-xylulose 5-phosphate: step 3/6. Catalyzes the phosphorylation of the position 2 hydroxy group of 4-diphosphocytidyl-2C-methyl-D-erythritol. This Shewanella loihica (strain ATCC BAA-1088 / PV-4) protein is 4-diphosphocytidyl-2-C-methyl-D-erythritol kinase.